Reading from the N-terminus, the 260-residue chain is Type II methyltransferase M.CviBI (260 aa).

Residues tryptophan 7, lysine 11, aspartate 54, and aspartate 177 each coordinate S-adenosyl-L-methionine.

The protein belongs to the N(4)/N(6)-methyltransferase family.

It carries out the reaction a 2'-deoxyadenosine in DNA + S-adenosyl-L-methionine = an N(6)-methyl-2'-deoxyadenosine in DNA + S-adenosyl-L-homocysteine + H(+). Functionally, a alpha subtype methylase, recognizes the double-stranded sequence 5'-GANTC-3', methylates A-2 on both strands, and protects the DNA from cleavage by the CviBI endonuclease. The chain is Type II methyltransferase M.CviBI from Paramecium bursaria Chlorella virus NC1A (PBCV-NC1A).